The sequence spans 555 residues: uncharacterized protein (555 aa).

Over 1–83 (MSNEDETTRL…GRRKLLCLYG (83 aa)) the chain is Extracellular. Residues 84 to 104 (LVMIICIAESISMTATIPLVM) form a helical membrane-spanning segment. The Cytoplasmic segment spans residues 105 to 125 (DKVAEGISDENGHYDSVAVQT). Residues 126–146 (IVSSISSSTMMIAGAISIFMA) form a helical membrane-spanning segment. The Extracellular portion of the chain corresponds to 147 to 188 (GKWGELSDRIGRVRVFKYMSGIRVIGLLTHVFTLSSKMKYHK). A helical transmembrane segment spans residues 189–209 (WAIVLTACIVPSFGGLFALVA). Over 210–229 (NGNSYVSDIVKTEHRMVTIG) the chain is Cytoplasmic. A helical transmembrane segment spans residues 230-250 (IMMSCIYATMGVGPMFGSFLV). The Extracellular portion of the chain corresponds to 251–257 (KWTHGNG). Residues 258–278 (FIPIYTSIAFVILALIICETI) form a helical membrane-spanning segment. The Cytoplasmic portion of the chain corresponds to 279 to 356 (MVEPRHETQM…LVPRHTVILL (78 aa)). The disordered stretch occupies residues 289 to 311 (AHSQSTYTKRREKLRSQSGSDDA). A helical membrane pass occupies residues 357-377 (IVLDILFVCGTTSCMPALILF). The Extracellular segment spans residues 378–386 (STYEYKWHA). A helical membrane pass occupies residues 387–407 (VELGYFISILGIGRGVVLLVV). The Cytoplasmic portion of the chain corresponds to 408 to 428 (SPTLLYTLKRIYQHLNHSIDK). Residues 429–449 (IDIFCIQFSMIVITLSLFVMI) form a helical membrane-spanning segment. At 450–459 (RFGEKTPTSM) the chain is on the extracellular side. The helical transmembrane segment at 460-480 (IIFALLQALSAFCSPTLQSGI) threads the bilayer. The Cytoplasmic segment spans residues 481-491 (IKYTSKKHTGE). The helical transmembrane segment at 492-512 (MFGAMALVRSCVMLVIPPILL) threads the bilayer. Over 513 to 523 (KLYGSTVSVNP) the chain is Extracellular. The chain crosses the membrane as a helical span at residues 524–544 (SLFMYIPFSTSIVAILLTFFL). The Cytoplasmic portion of the chain corresponds to 545 to 555 (RIYKNPPLDGP).

Its subcellular location is the membrane. This is an uncharacterized protein from Saccharomyces cerevisiae (strain ATCC 204508 / S288c) (Baker's yeast).